A 125-amino-acid polypeptide reads, in one-letter code: Cytochrome c-556 (125 aa).

Heme is bound by residues Met13, Cys113, Cys116, and His117. Residues Met13, Cys113, Cys116, and His117 each coordinate heme c.

In terms of assembly, monomer. In terms of processing, binds 1 heme c group covalently per subunit.

In terms of biological role, low-spin monoheme cytochrome c. The sequence is that of Cytochrome c-556 from Agrobacterium tumefaciens (strain apple 185).